Consider the following 253-residue polypeptide: Pimeloyl-[acyl-carrier protein] methyl ester esterase (253 aa).

Substrate contacts are provided by residues Trp18, 78–79 (SL), and 139–143 (FLALD). Residue Ser78 is the Nucleophile of the active site. Residues Asp203 and His231 contribute to the active site. His231 lines the substrate pocket.

This sequence belongs to the AB hydrolase superfamily. Carboxylesterase BioH family. In terms of assembly, monomer.

It is found in the cytoplasm. The catalysed reaction is 6-carboxyhexanoyl-[ACP] methyl ester + H2O = 6-carboxyhexanoyl-[ACP] + methanol + H(+). The protein operates within cofactor biosynthesis; biotin biosynthesis. The physiological role of BioH is to remove the methyl group introduced by BioC when the pimeloyl moiety is complete. It allows to synthesize pimeloyl-ACP via the fatty acid synthetic pathway through the hydrolysis of the ester bonds of pimeloyl-ACP esters. This Xanthomonas axonopodis pv. citri (strain 306) protein is Pimeloyl-[acyl-carrier protein] methyl ester esterase.